Here is a 218-residue protein sequence, read N- to C-terminus: Thiamine-phosphate synthase (218 aa).

4-amino-2-methyl-5-(diphosphooxymethyl)pyrimidine-binding positions include 36–40 (QVRSK) and D70. Mg(2+) is bound by residues D71 and D94. Position 113 (T113) interacts with 4-amino-2-methyl-5-(diphosphooxymethyl)pyrimidine. 141–143 (TPT) is a 2-[(2R,5Z)-2-carboxy-4-methylthiazol-5(2H)-ylidene]ethyl phosphate binding site. K144 serves as a coordination point for 4-amino-2-methyl-5-(diphosphooxymethyl)pyrimidine.

It belongs to the thiamine-phosphate synthase family. It depends on Mg(2+) as a cofactor.

The enzyme catalyses 2-[(2R,5Z)-2-carboxy-4-methylthiazol-5(2H)-ylidene]ethyl phosphate + 4-amino-2-methyl-5-(diphosphooxymethyl)pyrimidine + 2 H(+) = thiamine phosphate + CO2 + diphosphate. The catalysed reaction is 2-(2-carboxy-4-methylthiazol-5-yl)ethyl phosphate + 4-amino-2-methyl-5-(diphosphooxymethyl)pyrimidine + 2 H(+) = thiamine phosphate + CO2 + diphosphate. It carries out the reaction 4-methyl-5-(2-phosphooxyethyl)-thiazole + 4-amino-2-methyl-5-(diphosphooxymethyl)pyrimidine + H(+) = thiamine phosphate + diphosphate. Its pathway is cofactor biosynthesis; thiamine diphosphate biosynthesis; thiamine phosphate from 4-amino-2-methyl-5-diphosphomethylpyrimidine and 4-methyl-5-(2-phosphoethyl)-thiazole: step 1/1. Functionally, condenses 4-methyl-5-(beta-hydroxyethyl)thiazole monophosphate (THZ-P) and 2-methyl-4-amino-5-hydroxymethyl pyrimidine pyrophosphate (HMP-PP) to form thiamine monophosphate (TMP). In Corynebacterium jeikeium (strain K411), this protein is Thiamine-phosphate synthase.